The following is a 688-amino-acid chain: Potassium-transporting ATPase ATP-binding subunit (688 aa).

The next 4 helical transmembrane spans lie at 34–54 (PVMF…LAIL), 62–82 (AMFT…ANMA), 219–239 (VALT…TATL), and 260–280 (VLVA…LSAI). The active-site 4-aspartylphosphate intermediate is the Asp313. ATP is bound by residues Asp350, Glu354, 383–390 (FSAQTRMS), and Lys401. Residues Asp524 and Asp528 each coordinate Mg(2+). 3 helical membrane passes run 594-614 (FAII…LNIM), 622-642 (AILS…PLAL), and 662-682 (IYGL…DLLL).

The protein belongs to the cation transport ATPase (P-type) (TC 3.A.3) family. Type IA subfamily. The system is composed of three essential subunits: KdpA, KdpB and KdpC.

The protein localises to the cell inner membrane. The enzyme catalyses K(+)(out) + ATP + H2O = K(+)(in) + ADP + phosphate + H(+). Part of the high-affinity ATP-driven potassium transport (or Kdp) system, which catalyzes the hydrolysis of ATP coupled with the electrogenic transport of potassium into the cytoplasm. This subunit is responsible for energy coupling to the transport system and for the release of the potassium ions to the cytoplasm. This Yersinia pseudotuberculosis serotype O:1b (strain IP 31758) protein is Potassium-transporting ATPase ATP-binding subunit.